Reading from the N-terminus, the 250-residue chain is N-acyl homoserine lactonase (250 aa).

Positions 104, 106, 108, 109, 169, 191, and 235 each coordinate Zn(2+).

It belongs to the metallo-beta-lactamase superfamily. Monomer. Zn(2+) serves as cofactor.

It catalyses the reaction an N-acyl-L-homoserine lactone + H2O = an N-acyl-L-homoserine + H(+). Its function is as follows. Catalyzes hydrolysis of N-hexanoyl-(S)-homoserine lactone, but not the R-enantiomer. Hydrolyzes short- and long-chain N-acyl homoserine lactones with or without 3-oxo substitution at C3, has maximum activity on C10-AHL. In Bacillus thuringiensis subsp. indiana, this protein is N-acyl homoserine lactonase.